Here is a 226-residue protein sequence, read N- to C-terminus: Late protein I226R (226 aa).

A signal peptide spans 1–16 (MKMETFLVCLFHNADG). Asn-142 and Asn-164 each carry an N-linked (GlcNAc...) asparagine; by host glycan.

The protein belongs to the asfivirus I226R family.

In terms of biological role, plays a role in the inhibition of host NF-kappa-B and IRF3 signaling pathways. Mechanistically, promotes the degradation of host IKBKG through enhancing its ubiquitination leading to inhibition of both pathways. The protein is Late protein I226R of Ornithodoros (relapsing fever ticks).